A 495-amino-acid chain; its full sequence is Thioredoxin reductase SEP1 (495 aa).

Residue 37 to 54 (DFVKPSPPGTTWGLGGTC) coordinates FAD. A disulfide bond links Cys54 and Cys59. His468 acts as the Proton acceptor in catalysis. Positions 493–494 (CU) form a cross-link, cysteinyl-selenocysteine (Cys-Sec). Residue Sec494 is a non-standard amino acid, selenocysteine.

It belongs to the class-I pyridine nucleotide-disulfide oxidoreductase family. As to quaternary structure, homodimer. Requires FAD as cofactor. In terms of processing, the N-terminus is blocked.

The catalysed reaction is [thioredoxin]-dithiol + NADP(+) = [thioredoxin]-disulfide + NADPH + H(+). Its activity is regulated as follows. Activity was very low in selenium-depleted cells, but increased 4-fold to the same level as in selenium-sufficient cells for 70 hours after the addition of 10 nm selenite. The polypeptide is Thioredoxin reductase SEP1 (SEP1) (Emiliania huxleyi (Coccolithophore)).